The chain runs to 477 residues: Bifunctional protein HldE (477 aa).

A ribokinase region spans residues 1–318; that stretch reads MKVNLPAFER…ENAVRGRADT (318 aa). 195-198 provides a ligand contact to ATP; that stretch reads NLSE. Aspartate 264 is a catalytic residue. Residues 344-477 are cytidylyltransferase; that stretch reads MTNGVFDILH…IKKIQTESEK (134 aa).

It in the N-terminal section; belongs to the carbohydrate kinase PfkB family. In the C-terminal section; belongs to the cytidylyltransferase family. As to quaternary structure, homodimer.

The enzyme catalyses D-glycero-beta-D-manno-heptose 7-phosphate + ATP = D-glycero-beta-D-manno-heptose 1,7-bisphosphate + ADP + H(+). It carries out the reaction D-glycero-beta-D-manno-heptose 1-phosphate + ATP + H(+) = ADP-D-glycero-beta-D-manno-heptose + diphosphate. It participates in nucleotide-sugar biosynthesis; ADP-L-glycero-beta-D-manno-heptose biosynthesis; ADP-L-glycero-beta-D-manno-heptose from D-glycero-beta-D-manno-heptose 7-phosphate: step 1/4. It functions in the pathway nucleotide-sugar biosynthesis; ADP-L-glycero-beta-D-manno-heptose biosynthesis; ADP-L-glycero-beta-D-manno-heptose from D-glycero-beta-D-manno-heptose 7-phosphate: step 3/4. Its function is as follows. Catalyzes the phosphorylation of D-glycero-D-manno-heptose 7-phosphate at the C-1 position to selectively form D-glycero-beta-D-manno-heptose-1,7-bisphosphate. In terms of biological role, catalyzes the ADP transfer from ATP to D-glycero-beta-D-manno-heptose 1-phosphate, yielding ADP-D-glycero-beta-D-manno-heptose. The chain is Bifunctional protein HldE from Salmonella dublin (strain CT_02021853).